Reading from the N-terminus, the 383-residue chain is tRNA(Met) cytidine acetate ligase (383 aa).

ATP-binding positions include 7–20 (IAEF…HEFL), glycine 101, asparagine 153, and 178–179 (RI).

Belongs to the TmcAL family.

It localises to the cytoplasm. It carries out the reaction cytidine(34) in elongator tRNA(Met) + acetate + ATP = N(4)-acetylcytidine(34) in elongator tRNA(Met) + AMP + diphosphate. Its function is as follows. Catalyzes the formation of N(4)-acetylcytidine (ac(4)C) at the wobble position of elongator tRNA(Met), using acetate and ATP as substrates. First activates an acetate ion to form acetyladenylate (Ac-AMP) and then transfers the acetyl group to tRNA to form ac(4)C34. The protein is tRNA(Met) cytidine acetate ligase of Lactobacillus acidophilus (strain ATCC 700396 / NCK56 / N2 / NCFM).